The following is a 504-amino-acid chain: Maturase K (504 aa).

Belongs to the intron maturase 2 family. MatK subfamily.

The protein localises to the plastid. It localises to the chloroplast. Functionally, usually encoded in the trnK tRNA gene intron. Probably assists in splicing its own and other chloroplast group II introns. The sequence is that of Maturase K from Adenostoma fasciculatum (Chamise).